The chain runs to 230 residues: Type II restriction enzyme SinI (230 aa).

The catalysed reaction is Endonucleolytic cleavage of DNA to give specific double-stranded fragments with terminal 5'-phosphates.. Its function is as follows. A P subtype restriction enzyme that recognizes the double-stranded sequence 5'-GGWCC-3' and cleaves after G-1. This chain is Type II restriction enzyme SinI (sinIR), found in Salmonella infantis.